Here is a 541-residue protein sequence, read N- to C-terminus: Chaperonin GroEL (541 aa).

Residues 29 to 32 (TLGP), 86 to 90 (DGTTT), glycine 413, 480 to 482 (NAA), and aspartate 496 each bind ATP.

The protein belongs to the chaperonin (HSP60) family. In terms of assembly, forms a cylinder of 14 subunits composed of two heptameric rings stacked back-to-back. Interacts with the co-chaperonin GroES.

Its subcellular location is the cytoplasm. The catalysed reaction is ATP + H2O + a folded polypeptide = ADP + phosphate + an unfolded polypeptide.. Functionally, together with its co-chaperonin GroES, plays an essential role in assisting protein folding. The GroEL-GroES system forms a nano-cage that allows encapsulation of the non-native substrate proteins and provides a physical environment optimized to promote and accelerate protein folding. The polypeptide is Chaperonin GroEL (Gardnerella vaginalis).